A 418-amino-acid chain; its full sequence is Metacaspase-2 (418 aa).

The segment at 68–113 (PSPYTHAPHAPSPFNHAPPDSYPFTHAPPASSPFNHAPPGPPPPVH) is disordered. Positions 70-80 (PYTHAPHAPSP) are enriched in low complexity. Residues 103 to 112 (HAPPGPPPPV) are compositionally biased toward pro residues. Active-site residues include H200 and C256. A disordered region spans residues 385 to 406 (PDEEEEVNQAPQKTQEPQLSAN). Polar residues predominate over residues 393–405 (QAPQKTQEPQLSA).

Belongs to the peptidase C14B family.

Its function is as follows. Acts as a negative regulator of oxidative stress cell death and hypersensitive cell death response mediated by immune response. Acts via indirect or direct regulation of AMC1 at postranscriptional level. The protein is Metacaspase-2 (AMC2) of Arabidopsis thaliana (Mouse-ear cress).